We begin with the raw amino-acid sequence, 81 residues long: Large ribosomal subunit protein bL27 (81 aa).

Positions 1 to 22 are disordered; that stretch reads MAHKTGQSSSSNGRESKSKRLG.

The protein belongs to the bacterial ribosomal protein bL27 family.

This is Large ribosomal subunit protein bL27 from Opitutus terrae (strain DSM 11246 / JCM 15787 / PB90-1).